Here is a 217-residue protein sequence, read N- to C-terminus: Pyridoxine/pyridoxamine 5'-phosphate oxidase (217 aa).

Substrate is bound by residues 13-16 and lysine 71; that span reads RREY. FMN contacts are provided by residues 66–71, 81–82, arginine 87, lysine 88, and glutamine 110; these read RIVLLK and YT. Residues tyrosine 128, arginine 132, and serine 136 each contribute to the substrate site. Residues 145 to 146 and tryptophan 190 each bind FMN; that span reads QS. 196–198 lines the substrate pocket; it reads RLH. Arginine 200 contributes to the FMN binding site.

It belongs to the pyridoxamine 5'-phosphate oxidase family. Homodimer. The cofactor is FMN.

It catalyses the reaction pyridoxamine 5'-phosphate + O2 + H2O = pyridoxal 5'-phosphate + H2O2 + NH4(+). The enzyme catalyses pyridoxine 5'-phosphate + O2 = pyridoxal 5'-phosphate + H2O2. The protein operates within cofactor metabolism; pyridoxal 5'-phosphate salvage; pyridoxal 5'-phosphate from pyridoxamine 5'-phosphate: step 1/1. Its pathway is cofactor metabolism; pyridoxal 5'-phosphate salvage; pyridoxal 5'-phosphate from pyridoxine 5'-phosphate: step 1/1. Functionally, catalyzes the oxidation of either pyridoxine 5'-phosphate (PNP) or pyridoxamine 5'-phosphate (PMP) into pyridoxal 5'-phosphate (PLP). The sequence is that of Pyridoxine/pyridoxamine 5'-phosphate oxidase from Serratia proteamaculans (strain 568).